A 360-amino-acid polypeptide reads, in one-letter code: Methylthioribose-1-phosphate isomerase (360 aa).

The Proton donor role is filled by Asp246.

The protein belongs to the eIF-2B alpha/beta/delta subunits family. MtnA subfamily.

Its subcellular location is the cytoplasm. It is found in the nucleus. The enzyme catalyses 5-(methylsulfanyl)-alpha-D-ribose 1-phosphate = 5-(methylsulfanyl)-D-ribulose 1-phosphate. It functions in the pathway amino-acid biosynthesis; L-methionine biosynthesis via salvage pathway; L-methionine from S-methyl-5-thio-alpha-D-ribose 1-phosphate: step 1/6. Catalyzes the interconversion of methylthioribose-1-phosphate (MTR-1-P) into methylthioribulose-1-phosphate (MTRu-1-P). The polypeptide is Methylthioribose-1-phosphate isomerase (Aedes aegypti (Yellowfever mosquito)).